An 833-amino-acid chain; its full sequence is Leucine--tRNA ligase (833 aa).

Residues 41 to 52 (PYPSGAGLHVGH) carry the 'HIGH' region motif. Residues 610-614 (KMSKS) carry the 'KMSKS' region motif. Lys-613 contributes to the ATP binding site.

The protein belongs to the class-I aminoacyl-tRNA synthetase family.

The protein localises to the cytoplasm. It carries out the reaction tRNA(Leu) + L-leucine + ATP = L-leucyl-tRNA(Leu) + AMP + diphosphate. The polypeptide is Leucine--tRNA ligase (Streptococcus pneumoniae (strain Taiwan19F-14)).